The chain runs to 196 residues: Carnitine operon protein CaiE (196 aa).

Residues 177-196 (RQMEENRPRLQGTTDVMPKR) form a disordered region.

Belongs to the transferase hexapeptide repeat family.

Its pathway is amine and polyamine metabolism; carnitine metabolism. Functionally, overproduction of CaiE stimulates the activity of CaiB and CaiD. This chain is Carnitine operon protein CaiE, found in Escherichia coli O17:K52:H18 (strain UMN026 / ExPEC).